Consider the following 693-residue polypeptide: F-box protein MAX2 (693 aa).

Positions 3–50 (STTLSDLPDVILSTISSLVSDSRARNSLSLVSHKFLALERSTRSHLTI) constitute an F-box domain. 14 LRR repeats span residues 9-34 (LPDV…SLVS), 49-74 (TIRG…DLSF), 75-100 (LSPW…RLKF), 110-135 (VYTR…KLLR), 141-167 (SQIP…DLSN), 168-196 (FYHW…DLLT), 200-225 (TEGY…RVAC), 232-257 (FEFV…HMVD), 274-299 (DSAV…VLDV), 302-327 (DVKH…KLGQ), 332-356 (CSAT…SIKN), 357-382 (SGDL…EIQG), 383-409 (CENV…RISC), and 410-436 (CKNL…HIDC). The disordered stretch occupies residues 445 to 465 (EVEGRVETSEADHEEEDDGYE). LRR repeat units lie at residues 480–505 (CSTS…SLWI), 508–532 (GEFL…RIKI), 541–565 (RPAE…QLDC), and 608–637 (DRDV…FIHG).

Part of a SCF (SKP1-cullin-F-box) protein ligase complex. Interacts with SKP1A/ASK1. Interacts with CUL1. Interacts with SMXL6, SMXL7 and SMXL8. Interacts with D14. Forms a complex with D14 and SKP1A/ASK1 in presence of strigolactone. As to expression, expressed in the vasculature of growing leaves and roots, rosette axillary bud, flowers, siliques, funiculi and stems.

The protein localises to the nucleus. It participates in protein modification; protein ubiquitination. In terms of biological role, component of SCF(ASK-cullin-F-box) E3 ubiquitin ligase complexes, which may mediate the ubiquitination and subsequent proteasomal degradation of target proteins. Promotes the senescence. Is necessary for responses to strigolactones and karrikins. Contributes to the selective repression of axillary shoots and moderates the branching by regulating negatively the auxin transport in primary stems, in an AXR1-independent manner. Required for the progression of leaf senescence mediated by methyl jasmonate. Required at each node to suppress axillary bud growth. This is F-box protein MAX2 from Arabidopsis thaliana (Mouse-ear cress).